A 125-amino-acid chain; its full sequence is Large ribosomal subunit protein bL12 (125 aa).

The protein belongs to the bacterial ribosomal protein bL12 family. Homodimer. Part of the ribosomal stalk of the 50S ribosomal subunit. Forms a multimeric L10(L12)X complex, where L10 forms an elongated spine to which 2 to 4 L12 dimers bind in a sequential fashion. Binds GTP-bound translation factors.

Functionally, forms part of the ribosomal stalk which helps the ribosome interact with GTP-bound translation factors. Is thus essential for accurate translation. The chain is Large ribosomal subunit protein bL12 from Variovorax paradoxus (strain S110).